Consider the following 292-residue polypeptide: Fat storage-inducing transmembrane protein 1 (292 aa).

The Lumenal segment spans residues Met1 to Arg18. A helical transmembrane segment spans residues Ala19–Gly39. At Ser40–Arg54 the chain is on the cytoplasmic side. A helical transmembrane segment spans residues Leu55–Asn75. At Pro76 to Ser94 the chain is on the lumenal side. The chain crosses the membrane as a helical span at residues Ala95 to Thr115. The Cytoplasmic portion of the chain corresponds to Arg116–Ala141. A helical membrane pass occupies residues Phe142 to Leu162. Residues His163 to Thr187 lie on the Lumenal side of the membrane. Residue His186 is part of the active site. The chain crosses the membrane as a helical span at residues Phe188–Leu208. Over Ala209 to Leu220 the chain is Cytoplasmic. A helical membrane pass occupies residues Val221–Ile241. At Tyr242–Lys249 the chain is on the lumenal side. The active site involves His244. The chain crosses the membrane as a helical span at residues Val250 to Gln270. At Pro271–Asn292 the chain is on the cytoplasmic side.

This sequence belongs to the FIT family. FIT1 subfamily.

The protein resides in the endoplasmic reticulum membrane. Functionally, plays an important role in the formation of lipid droplets (LDs) which are storage organelles at the center of lipid and energy homeostasis. Directly binds to diacylglycerol (DAGs) and triacylglycerol. This Bos taurus (Bovine) protein is Fat storage-inducing transmembrane protein 1.